A 115-amino-acid polypeptide reads, in one-letter code: Large ribosomal subunit protein P1 (115 aa).

Low complexity predominate over residues 56 to 73; sequence QAAAAPVPASGGAAAPAE. Residues 56–115 are disordered; the sequence is QAAAAPVPASGGAAAPAEGDADEADEADEEAEEEAADDGGDDDDDEDDEASGEGLGELFG. Residues 74 to 106 are compositionally biased toward acidic residues; the sequence is GDADEADEADEEAEEEAADDGGDDDDDEDDEAS.

This sequence belongs to the eukaryotic ribosomal protein P1/P2 family. Part of the 50S ribosomal subunit. Homodimer, it forms part of the ribosomal stalk which helps the ribosome interact with GTP-bound translation factors. Forms a heptameric uL10/P0(P1)2(P1)2(P1)2 complex, where uL10/P0 forms an elongated spine to which the P1 dimers bind in a sequential fashion.

In terms of biological role, forms part of the ribosomal stalk, playing a central role in the interaction of the ribosome with GTP-bound translation factors. The sequence is that of Large ribosomal subunit protein P1 from Haloarcula marismortui (strain ATCC 43049 / DSM 3752 / JCM 8966 / VKM B-1809) (Halobacterium marismortui).